The following is a 236-amino-acid chain: Phosphoribosylaminoimidazole-succinocarboxamide synthase (236 aa).

It belongs to the SAICAR synthetase family.

The enzyme catalyses 5-amino-1-(5-phospho-D-ribosyl)imidazole-4-carboxylate + L-aspartate + ATP = (2S)-2-[5-amino-1-(5-phospho-beta-D-ribosyl)imidazole-4-carboxamido]succinate + ADP + phosphate + 2 H(+). It functions in the pathway purine metabolism; IMP biosynthesis via de novo pathway; 5-amino-1-(5-phospho-D-ribosyl)imidazole-4-carboxamide from 5-amino-1-(5-phospho-D-ribosyl)imidazole-4-carboxylate: step 1/2. The sequence is that of Phosphoribosylaminoimidazole-succinocarboxamide synthase from Campylobacter jejuni subsp. doylei (strain ATCC BAA-1458 / RM4099 / 269.97).